Reading from the N-terminus, the 309-residue chain is Malate dehydrogenase (309 aa).

Residues 8 to 13 and Asp33 each bind NAD(+); that span reads GAGLVG. Positions 82 and 88 each coordinate substrate. Residues Asn95 and 118–120 contribute to the NAD(+) site; that span reads VSN. Residues Asn120 and Arg151 each contribute to the substrate site. His175 serves as the catalytic Proton acceptor.

The protein belongs to the LDH/MDH superfamily. MDH type 3 family.

It catalyses the reaction (S)-malate + NAD(+) = oxaloacetate + NADH + H(+). Its function is as follows. Catalyzes the reversible oxidation of malate to oxaloacetate. The polypeptide is Malate dehydrogenase (Pseudomonas putida (strain ATCC 700007 / DSM 6899 / JCM 31910 / BCRC 17059 / LMG 24140 / F1)).